Consider the following 690-residue polypeptide: Glycine--tRNA ligase beta subunit (690 aa).

This sequence belongs to the class-II aminoacyl-tRNA synthetase family. As to quaternary structure, tetramer of two alpha and two beta subunits.

The protein localises to the cytoplasm. The catalysed reaction is tRNA(Gly) + glycine + ATP = glycyl-tRNA(Gly) + AMP + diphosphate. The polypeptide is Glycine--tRNA ligase beta subunit (Tolumonas auensis (strain DSM 9187 / NBRC 110442 / TA 4)).